Consider the following 462-residue polypeptide: Zinc transporter zipt-7.2 (462 aa).

The helical transmembrane segment at 2 to 22 threads the bilayer; that stretch reads LVKSCIFLSFLAIAAYGQAHL. Residues 39–134 are disordered; sequence HHQGHGHAHG…HGHSHGAESA (96 aa). The span at 40-51 shows a compositional bias: basic residues; that stretch reads HQGHGHAHGGHG. The segment covering 65-74 has biased composition (low complexity); that stretch reads AAAAEAATAA. A compositionally biased stretch (basic and acidic residues) spans 75 to 94; it reads AHDHGHAHDHDHGHAHDHGH. The span at 111-120 shows a compositional bias: basic residues; it reads HGHAHDHHGH. The segment covering 121–132 has biased composition (basic and acidic residues); that stretch reads SHEDHGHSHGAE. The chain crosses the membrane as a helical span at residues 161-181; that stretch reads AISATLLISAAPCFILMFIPI. A glycan (N-linked (GlcNAc...) asparagine) is linked at Asn184. Residues 194–214 traverse the membrane as a helical segment; that stretch reads VLLAFGSGGLLGDAFLHLIPH. The interval 219–239 is disordered; that stretch reads GDGHGHSHSHGHSHGGGGHSH. Residues 244 to 264 form a helical membrane-spanning segment; it reads MSVGGWVLGGIIAFLTVEKLV. Residues 270-307 form a disordered region; it reads EDGHGHSHGHSHGGEKKETKEKDSKDKVAKKEEKPEKD. Positions 281–307 are enriched in basic and acidic residues; it reads HGGEKKETKEKDSKDKVAKKEEKPEKD. N-linked (GlcNAc...) asparagine glycosylation occurs at Asn326. The next 3 membrane-spanning stretches (helical) occupy residues 333–353, 376–396, and 410–430; these read IGASFIAGTTVGIVTMITVLV, AMLIQLVTALGALSGCVISLF, and SWVLPFTAGGFIYIATVSVIP. The N-linked (GlcNAc...) asparagine glycan is linked to Asn435. A helical transmembrane segment spans residues 441–461; sequence TVKEIFAILTGIFLMYLIAIY.

The protein belongs to the ZIP transporter (TC 2.A.5) family. KE4/Catsup subfamily. Expressed in somatic tissues.

Its subcellular location is the membrane. Zinc transporter. This is Zinc transporter zipt-7.2 from Caenorhabditis elegans.